We begin with the raw amino-acid sequence, 443 residues long: Ribosomal protein uS12 methylthiotransferase RimO (443 aa).

The MTTase N-terminal domain occupies 10–120 (PRVGFVSLGC…VMAAVHAQCP (111 aa)). Residues C19, C55, C84, C152, C156, and C159 each coordinate [4Fe-4S] cluster. Residues 138 to 375 (LTPRHYAYLK…MALQAEISAR (238 aa)) enclose the Radical SAM core domain. A TRAM domain is found at 378–443 (ARRVGTECTV…DEHDLYGRVL (66 aa)).

The protein belongs to the methylthiotransferase family. RimO subfamily. [4Fe-4S] cluster is required as a cofactor.

The protein localises to the cytoplasm. It catalyses the reaction L-aspartate(89)-[ribosomal protein uS12]-hydrogen + (sulfur carrier)-SH + AH2 + 2 S-adenosyl-L-methionine = 3-methylsulfanyl-L-aspartate(89)-[ribosomal protein uS12]-hydrogen + (sulfur carrier)-H + 5'-deoxyadenosine + L-methionine + A + S-adenosyl-L-homocysteine + 2 H(+). Catalyzes the methylthiolation of an aspartic acid residue of ribosomal protein uS12. In Alkalilimnicola ehrlichii (strain ATCC BAA-1101 / DSM 17681 / MLHE-1), this protein is Ribosomal protein uS12 methylthiotransferase RimO.